Reading from the N-terminus, the 580-residue chain is Protein O-linked-mannose beta-1,4-N-acetylglucosaminyltransferase 2 (580 aa).

Over 1 to 4 (MHLS) the chain is Cytoplasmic. A helical; Signal-anchor for type II membrane protein transmembrane segment spans residues 5-25 (AVFNALLVSVLAAVLWKHVRL). Residues 26-580 (REHAATLEEE…PFADVLVCST (555 aa)) are Lumenal-facing. Asparagine 99 and asparagine 276 each carry an N-linked (GlcNAc...) asparagine glycan. The region spanning 488–580 (ARCQASVQGA…PFADVLVCST (93 aa)) is the Fibronectin type-III domain.

The protein belongs to the glycosyltransferase 61 family. In terms of tissue distribution, mainly expressed in the central nervous system.

The protein localises to the endoplasmic reticulum membrane. The enzyme catalyses 3-O-(alpha-D-mannosyl)-L-threonyl-[protein] + UDP-N-acetyl-alpha-D-glucosamine = 3-O-(N-acetyl-beta-D-glucosaminyl-(1-&gt;4)-alpha-D-mannosyl)-L-threonyl-[protein] + UDP + H(+). The protein operates within protein modification; protein glycosylation. Its function is as follows. O-linked mannose beta-1,4-N-acetylglucosaminyltransferase that transfers UDP-N-acetyl-D-glucosamine to the 4-position of the mannose to generate N-acetyl-D-glucosamine-beta-1,4-O-D-mannosylprotein. Involved in the biosynthesis of the phosphorylated O-mannosyl trisaccharide (N-acetylgalactosamine-beta-3-N-acetylglucosamine-beta-4-(phosphate-6-)mannose), a carbohydrate structure present in alpha-dystroglycan (DAG1), which is required for binding laminin G-like domain-containing extracellular proteins with high affinity. This Mus musculus (Mouse) protein is Protein O-linked-mannose beta-1,4-N-acetylglucosaminyltransferase 2 (Pomgnt2).